The following is a 291-amino-acid chain: Probable protein S-acyltransferase 12 (291 aa).

2 helical membrane passes run 14–34 and 49–69; these read GYFMILLVVAVVGVSYYAVVV and LSALAALIIFVFHFLLIMLLW. The DHHC domain maps to 111 to 161; it reads GYCTKCRNVKPPRCHHCSVCQRCVLKMDHHCVWIVNCVGARNYKFFLLFLF. Cys-141 (S-palmitoyl cysteine intermediate) is an active-site residue. The next 2 helical transmembrane spans lie at 155 to 175 and 198 to 218; these read FFLLFLFYTFLETMLDVIVLL and LVLAFVLNFAFVLSLLCFVVM.

The protein belongs to the DHHC palmitoyltransferase family.

The protein resides in the cell membrane. It catalyses the reaction L-cysteinyl-[protein] + hexadecanoyl-CoA = S-hexadecanoyl-L-cysteinyl-[protein] + CoA. Functionally, palmitoyl acyltransferase. In Arabidopsis thaliana (Mouse-ear cress), this protein is Probable protein S-acyltransferase 12 (PAT12).